A 61-amino-acid polypeptide reads, in one-letter code: Small ribosomal subunit protein uS14 (61 aa).

Zn(2+)-binding residues include C24, C27, C40, and C43.

It belongs to the universal ribosomal protein uS14 family. Zinc-binding uS14 subfamily. As to quaternary structure, part of the 30S ribosomal subunit. Contacts proteins S3 and S10. It depends on Zn(2+) as a cofactor.

Binds 16S rRNA, required for the assembly of 30S particles and may also be responsible for determining the conformation of the 16S rRNA at the A site. This is Small ribosomal subunit protein uS14 from Symbiobacterium thermophilum (strain DSM 24528 / JCM 14929 / IAM 14863 / T).